We begin with the raw amino-acid sequence, 262 residues long: Hydroxyethylthiazole kinase (262 aa).

Met41 is a binding site for substrate. Arg117 and Ser163 together coordinate ATP. Residue Gly190 coordinates substrate.

The protein belongs to the Thz kinase family. Mg(2+) is required as a cofactor.

The catalysed reaction is 5-(2-hydroxyethyl)-4-methylthiazole + ATP = 4-methyl-5-(2-phosphooxyethyl)-thiazole + ADP + H(+). It participates in cofactor biosynthesis; thiamine diphosphate biosynthesis; 4-methyl-5-(2-phosphoethyl)-thiazole from 5-(2-hydroxyethyl)-4-methylthiazole: step 1/1. Catalyzes the phosphorylation of the hydroxyl group of 4-methyl-5-beta-hydroxyethylthiazole (THZ). In Levilactobacillus brevis (strain ATCC 367 / BCRC 12310 / CIP 105137 / JCM 1170 / LMG 11437 / NCIMB 947 / NCTC 947) (Lactobacillus brevis), this protein is Hydroxyethylthiazole kinase.